We begin with the raw amino-acid sequence, 908 residues long: MEEGGRDKAPLQPQQPPATSPGSGDEKPSGKERRDAGDKDKEQELSEEDKQLQDELEMLVERLGEKDTSLYRPALEELRRQIRSSTTSMTSVPKPLKFLRPHYGKLKEIYENMAPGENKRFAADIISVLAMTMSGERECLKYRLVGSQEELASWGHEYVRHLAGEVAKEWQELDDAEKTQREPLLTLVKEIVPYNMAHNAEHEACDLLMEIEQVDMLEKDIDENAYAKVCLYLTSCVNYVPEPENSALLRCALGVFRKFSRFPEALRLALMLNDMELVEDIFTSCKDVVVQKQMAFMLGRHGVFLELSEDVEEYEDLTEIMSNVQLNSNFLALARELDIMEPKVPDDIYKTHLENNRFGGSGSQVDSARMNLASSFVNGFVNAAFGQDKLLTDDGNKWLYKNKDHGMLSAAASLGMILLWDVDGGLTQIDKYLYSSEDYIKSGALLACGIVNSGVRNECDPALALLSDYVLHNSNTMRLGSIFGLGLAYAGSNREDVLTLLLPVMGDSKSSMEVAGVTALACGMIAVGSCNGDVTSTILQTIMEKSETELKDTYARWLPLGLGLNHLGKGEAIEAILAALEVVSEPFRSFANTLVDVCAYAGSGNVLKVQQLLHICSEHFDSKEKEEDKDKKEKKDKDKKEAPADMGAHQGVAVLGIALIAMGEEIGAEMALRTFGHLLRYGEPTLRRAVPLALALISVSNPRLNILDTLSKFSHDADPEVSYNSIFAMGMVGSGTNNARLAAMLRQLAQYHAKDPNNLFMVRLAQGLTHLGKGTLTLCPYHSDRQLMSQVAVAGLLTVLVSFLDVRNIILGKSHYVLYGLVAAMQPRMLVTFDEELRPLPVSVRVGQAVDVVGQAGKPKTITGFQTHTTPVLLAHGERAELATEEFLPVTPILEGFVILRKNPNYDL.

The residue at position 1 (M1) is an N-acetylmethionine. The interval 1–52 (MEEGGRDKAPLQPQQPPATSPGSGDEKPSGKERRDAGDKDKEQELSEEDKQL) is disordered. Positions 24–52 (GDEKPSGKERRDAGDKDKEQELSEEDKQL) are enriched in basic and acidic residues. Residues S29 and S147 each carry the phosphoserine modification. Residue Y194 is modified to Phosphotyrosine. Phosphoserine is present on residues S361 and S363. 5 PC repeats span residues 409 to 442 (SAAASLGMILLWDVDGGLTQIDKYLYSSEDYIKS), 443 to 479 (GALLACGIVNSGVRNECDPALALLSDYVLHNSNTMRL), 480 to 514 (GSIFGLGLAYAGSNREDVLTLLLPVMGDSKSSMEV), 517 to 551 (VTALACGMIAVGSCNGDVTSTILQTIMEKSETELK), and 560 to 589 (LGLGLNHLGKGEAIEAILAALEVVSEPFRS). The residue at position 551 (K551) is an N6-acetyllysine. Residues 623 to 643 (KEKEEDKDKKEKKDKDKKEAP) show a composition bias toward basic and acidic residues. The interval 623-645 (KEKEEDKDKKEKKDKDKKEAPAD) is disordered. PC repeat units follow at residues 692 to 723 (LALALISVSNPRLNILDTLSKFSHDADPEVSY) and 742 to 757 (AAMLRQLAQYHAKDPN). The required for interaction with UBLCP1 stretch occupies residues 708–903 (DTLSKFSHDA…LEGFVILRKN (196 aa)).

The protein belongs to the proteasome subunit S2 family. Component of the 19S proteasome regulatory particle complex. The 26S proteasome consists of a 20S core particle (CP) and two 19S regulatory subunits (RP). The regulatory particle is made of a lid composed of 9 subunits, a base containing 6 ATPases and few additional components including PSMD2. Interacts with RPGRIP1L. Interacts with CRY1 in a KDM8-dependent manner. Interacts (via C-terminus) with phosphatase UBLCP1 (via ubiquitin-like domain); the interaction recruits UBLCP1 to the 19S regulatory particle where it dephosphorylates 19S subunit PSMC2/RPT1 which impairs PSMC2 ATPase activity and disrupts 26S proteasome assembly.

Its function is as follows. Component of the 26S proteasome, a multiprotein complex involved in the ATP-dependent degradation of ubiquitinated proteins. This complex plays a key role in the maintenance of protein homeostasis by removing misfolded or damaged proteins, which could impair cellular functions, and by removing proteins whose functions are no longer required. Therefore, the proteasome participates in numerous cellular processes, including cell cycle progression, apoptosis, or DNA damage repair. In terms of biological role, binds to the intracellular domain of tumor necrosis factor type 1 receptor. The binding domain of TRAP1 and TRAP2 resides outside the death domain of TNFR1. The protein is 26S proteasome non-ATPase regulatory subunit 2 (PSMD2) of Bos taurus (Bovine).